Reading from the N-terminus, the 293-residue chain is Glycine--tRNA ligase alpha subunit (293 aa).

It belongs to the class-II aminoacyl-tRNA synthetase family. In terms of assembly, tetramer of two alpha and two beta subunits.

It is found in the cytoplasm. It catalyses the reaction tRNA(Gly) + glycine + ATP = glycyl-tRNA(Gly) + AMP + diphosphate. This chain is Glycine--tRNA ligase alpha subunit, found in Aliarcobacter butzleri (strain RM4018) (Arcobacter butzleri).